A 206-amino-acid chain; its full sequence is Enterobactin synthase component D (206 aa).

Mg(2+) contacts are provided by aspartate 107, glutamate 109, and glutamate 152.

This sequence belongs to the P-Pant transferase superfamily. EntD family. As to quaternary structure, entB, EntD, EntE, and EntF form a multienzyme complex called enterobactin synthase. Mg(2+) serves as cofactor.

It is found in the membrane. The enzyme catalyses apo-[aryl-carrier protein] + CoA = holo-[aryl-carrier protein] + adenosine 3',5'-bisphosphate + H(+). It carries out the reaction apo-[peptidyl-carrier protein] + CoA = holo-[peptidyl-carrier protein] + adenosine 3',5'-bisphosphate + H(+). It functions in the pathway siderophore biosynthesis; enterobactin biosynthesis. Its function is as follows. Involved in the biosynthesis of the siderophore enterobactin (enterochelin), which is a macrocyclic trimeric lactone of N-(2,3-dihydroxybenzoyl)-serine. The serine trilactone serves as a scaffolding for the three catechol functionalities that provide hexadentate coordination for the tightly ligated iron(2+) atoms. Plays an essential role in the assembly of the enterobactin by catalyzing the transfer of the 4'-phosphopantetheine (Ppant) moiety from coenzyme A to the apo-domains of both EntB (ArCP domain) and EntF (PCP domain) to yield their holo-forms which make them competent for the activation of 2,3-dihydroxybenzoate (DHB) and L-serine, respectively. The protein is Enterobactin synthase component D of Escherichia coli O157:H7.